The primary structure comprises 1459 residues: Endogenous retrovirus group K member 7 Pol protein (1459 aa).

The Reverse transcriptase domain occupies Leu57 to Ile245. An LPQG motif is present at residues Leu161–Gly164. The YXDD signature appears at Tyr195–Asp198. Positions Leu460 to Ile590 constitute an RNase H type-1 domain. Mg(2+)-binding residues include Asp469, Glu497, Asp517, and Asp582. The segment at Ser587–Gln628 adopts an Integrase-type zinc-finger fold. Positions 596, 600, 624, and 627 each coordinate Zn(2+). An Integrase catalytic domain is found at Arg642 to Lys803. Residues Lys811–Glu859 constitute a DNA-binding region (integrase-type).

It belongs to the beta type-B retroviral polymerase family. HERV class-II K(HML-2) pol subfamily.

It catalyses the reaction DNA(n) + a 2'-deoxyribonucleoside 5'-triphosphate = DNA(n+1) + diphosphate. It carries out the reaction Endonucleolytic cleavage to 5'-phosphomonoester.. In terms of biological role, early post-infection, the reverse transcriptase converts the viral RNA genome into double-stranded viral DNA. The RNase H domain of the reverse transcriptase performs two functions. It degrades the RNA template and specifically removes the RNA primer from the RNA/DNA hybrid. Following nuclear import, the integrase catalyzes the insertion of the linear, double-stranded viral DNA into the host cell chromosome. Endogenous Pol proteins may have kept, lost or modified their original function during evolution. The chain is Endogenous retrovirus group K member 7 Pol protein (ERVK-7) from Homo sapiens (Human).